Here is a 631-residue protein sequence, read N- to C-terminus: Translation factor GUF1, mitochondrial (631 aa).

The transit peptide at 1–19 directs the protein to the mitochondrion; that stretch reads MFNRRLLRHVRYAFQQVRS. Positions 33 to 214 constitute a tr-type G domain; the sequence is ERYRNFSIVA…AIVDRIPPPT (182 aa). GTP-binding positions include 42–49, 107–111, and 161–164; these read AHVDHGKS, DTPGH, and NKID.

The protein belongs to the TRAFAC class translation factor GTPase superfamily. Classic translation factor GTPase family. LepA subfamily.

It localises to the mitochondrion inner membrane. It catalyses the reaction GTP + H2O = GDP + phosphate + H(+). In terms of biological role, promotes mitochondrial protein synthesis. May act as a fidelity factor of the translation reaction, by catalyzing a one-codon backward translocation of tRNAs on improperly translocated ribosomes. Binds to mitochondrial ribosomes in a GTP-dependent manner. The chain is Translation factor GUF1, mitochondrial from Kluyveromyces lactis (strain ATCC 8585 / CBS 2359 / DSM 70799 / NBRC 1267 / NRRL Y-1140 / WM37) (Yeast).